A 372-amino-acid polypeptide reads, in one-letter code: GDP-mannose 4,6 dehydratase (372 aa).

Residues 1 to 20 (MAHAPARCPSARGSGDGEMG) form a disordered region. A2 is modified (N-acetylalanine). Residues 30–35 (GITGQD), 55–58 (RRSS), 86–87 (DL), 108–112 (LGAQS), and Y123 each bind NADP(+). T155 is a catalytic residue. Active-site nucleophile residues include E157 and Y179. K183, H209, and R214 together coordinate NADP(+). At Y323 the chain carries Phosphotyrosine.

It belongs to the NAD(P)-dependent epimerase/dehydratase family. GDP-mannose 4,6-dehydratase subfamily. It depends on NADP(+) as a cofactor. In terms of tissue distribution, highly expressed in pancreas and small intestine. Expressed in thymus, protstate, colon, heart, placenta, liver and kidney. Expressed at low levels in spleen, testis, brain and lung.

The enzyme catalyses GDP-alpha-D-mannose = GDP-4-dehydro-alpha-D-rhamnose + H2O. Its pathway is nucleotide-sugar biosynthesis; GDP-L-fucose biosynthesis via de novo pathway; GDP-L-fucose from GDP-alpha-D-mannose: step 1/2. Its activity is regulated as follows. Inhibited by GDP-fucose. In terms of biological role, catalyzes the conversion of GDP-D-mannose to GDP-4-dehydro-6-deoxy-D-mannose. This chain is GDP-mannose 4,6 dehydratase, found in Homo sapiens (Human).